Here is an 857-residue protein sequence, read N- to C-terminus: DNA mismatch repair protein MutS (857 aa).

Residue 608–615 coordinates ATP; the sequence is GPNMSGKS.

This sequence belongs to the DNA mismatch repair MutS family.

This protein is involved in the repair of mismatches in DNA. It is possible that it carries out the mismatch recognition step. This protein has a weak ATPase activity. In Lactobacillus gasseri (strain ATCC 33323 / DSM 20243 / BCRC 14619 / CIP 102991 / JCM 1131 / KCTC 3163 / NCIMB 11718 / NCTC 13722 / AM63), this protein is DNA mismatch repair protein MutS.